We begin with the raw amino-acid sequence, 324 residues long: NADH-quinone oxidoreductase subunit H (324 aa).

8 helical membrane-spanning segments follow: residues 11-31, 81-101, 114-134, 154-174, 186-206, 237-257, 264-284, and 304-324; these read ILITVGKAIVILLVVVTCGAF, VIFTLAPMIAFTSMLIAFAIV, IGILFFLMMAGLAVYAVLFAG, VSYEVFIGLSLMGVVAQAGSF, LWNVIPQFFGFITFAIAGVAV, FFVGEYIGIVTVSALMVTLFF, ILPPFVWFALKTGFFMMMFIL, and VCLPITLLNLLATAAVILYNA.

It belongs to the complex I subunit 1 family. As to quaternary structure, NDH-1 is composed of 13 different subunits. Subunits NuoA, H, J, K, L, M, N constitute the membrane sector of the complex.

Its subcellular location is the cell inner membrane. It carries out the reaction a quinone + NADH + 5 H(+)(in) = a quinol + NAD(+) + 4 H(+)(out). Functionally, NDH-1 shuttles electrons from NADH, via FMN and iron-sulfur (Fe-S) centers, to quinones in the respiratory chain. The immediate electron acceptor for the enzyme in this species is believed to be ubiquinone. Couples the redox reaction to proton translocation (for every two electrons transferred, four hydrogen ions are translocated across the cytoplasmic membrane), and thus conserves the redox energy in a proton gradient. This subunit may bind ubiquinone. The protein is NADH-quinone oxidoreductase subunit H of Pectobacterium carotovorum subsp. carotovorum (strain PC1).